The primary structure comprises 512 residues: Cytochrome P450 monooxygenase pbrB (512 aa).

Residues 6-29 traverse the membrane as a helical segment; the sequence is LSFPAAVGAAFGAFAIYVVARCIY. Residue Cys-452 coordinates heme.

The protein belongs to the cytochrome P450 family. It depends on heme as a cofactor.

Its subcellular location is the membrane. The protein operates within secondary metabolite biosynthesis; terpenoid biosynthesis. In terms of biological role, cytochrome P450 monooxygenase; part of the gene cluster that mediates the biosynthesis of the sesquiterpenoid aspterric acid (AA), an inhibitor of dihydroxy-acid dehydratase (DHAD) effective as an herbicide. PbrB catalyzes the second step within the pathway and converts (-)-daucane produced by the terpene cyclase pbrA into an alpha-epoxy carboxylate intermediate which is further converted into the tricyclic aspterric acid by the cytochrome P450 monooxygenase pbrC. The chain is Cytochrome P450 monooxygenase pbrB from Penicillium brasilianum.